The primary structure comprises 183 residues: Ribosome-recycling factor (183 aa).

This sequence belongs to the RRF family.

It localises to the cytoplasm. Functionally, responsible for the release of ribosomes from messenger RNA at the termination of protein biosynthesis. May increase the efficiency of translation by recycling ribosomes from one round of translation to another. The sequence is that of Ribosome-recycling factor from Deinococcus radiodurans (strain ATCC 13939 / DSM 20539 / JCM 16871 / CCUG 27074 / LMG 4051 / NBRC 15346 / NCIMB 9279 / VKM B-1422 / R1).